The following is a 156-amino-acid chain: Cyclic pyranopterin monophosphate synthase (156 aa).

Substrate is bound by residues 73-75 (LCH) and 110-111 (ME). The active site involves aspartate 125.

The protein belongs to the MoaC family. Homohexamer; trimer of dimers.

It catalyses the reaction (8S)-3',8-cyclo-7,8-dihydroguanosine 5'-triphosphate = cyclic pyranopterin phosphate + diphosphate. The protein operates within cofactor biosynthesis; molybdopterin biosynthesis. Its function is as follows. Catalyzes the conversion of (8S)-3',8-cyclo-7,8-dihydroguanosine 5'-triphosphate to cyclic pyranopterin monophosphate (cPMP). This is Cyclic pyranopterin monophosphate synthase from Pseudomonas putida (strain GB-1).